A 500-amino-acid polypeptide reads, in one-letter code: MELPRAFGLLLHPTSLPGPYGVGVLGREARDFLRFLKEAGGRYWQVLPLGPTGYGDSPYQSFSAFAGNPYLIDLRPLAERGYVRLEDPGFPQGRVDYGLLYAWKWPALKEAFRGFKEKASPEEREAFAAFREREAWWLEDYALFMALKGAHGGLPWNRWPLPLRKREEKALREAKSALAEEVAFHAFTQWLFFRQWGALKAEAEALGIRIIGDMPIFVAEDSAEVWAHPEWFHLDEEGRPTVVAGVPPDYFSETGQRWGNPLYRWDVLEREGFSFWIRRLEKALELFHLVRIDHFRGFEAYWEIPASCPTAVEGRWVKAPGEKLFQKIQEVFGEVPVLAEDLGVITPEVEALRDRFGLPGMKVLQFAFDDGMENPFLPHNYPAHGRVVVYTGTHDNDTTLGWYRTATPHEKAFMARYLADWGITFREEEEVPWALMHLGMKSVARLAVYPVQDVLALGSEARMNYPGRPSGNWAWRLLPGELSPEHGARLRAMAEATERL.

Belongs to the disproportionating enzyme family.

The protein localises to the cytoplasm. It catalyses the reaction Transfers a segment of a (1-&gt;4)-alpha-D-glucan to a new position in an acceptor, which may be glucose or a (1-&gt;4)-alpha-D-glucan.. This is 4-alpha-glucanotransferase (malQ) from Thermus thermophilus.